A 457-amino-acid chain; its full sequence is NADP-specific glutamate dehydrogenase (457 aa).

Lysine 111 is a catalytic residue.

It belongs to the Glu/Leu/Phe/Val dehydrogenases family. Homohexamer.

The enzyme catalyses L-glutamate + NADP(+) + H2O = 2-oxoglutarate + NH4(+) + NADPH + H(+). The polypeptide is NADP-specific glutamate dehydrogenase (gdhA) (Agaricus bisporus (White button mushroom)).